The following is a 307-amino-acid chain: tRNA pseudouridine synthase B (307 aa).

The Nucleophile role is filled by D38.

It belongs to the pseudouridine synthase TruB family. Type 1 subfamily.

The enzyme catalyses uridine(55) in tRNA = pseudouridine(55) in tRNA. In terms of biological role, responsible for synthesis of pseudouridine from uracil-55 in the psi GC loop of transfer RNAs. This is tRNA pseudouridine synthase B from Bacillus cereus (strain ZK / E33L).